The following is a 102-amino-acid chain: Large ribosomal subunit protein bL21 (102 aa).

This sequence belongs to the bacterial ribosomal protein bL21 family. In terms of assembly, part of the 50S ribosomal subunit. Contacts protein L20.

Its function is as follows. This protein binds to 23S rRNA in the presence of protein L20. This Geotalea daltonii (strain DSM 22248 / JCM 15807 / FRC-32) (Geobacter daltonii) protein is Large ribosomal subunit protein bL21.